The chain runs to 448 residues: Adenylosuccinate synthetase 1 (448 aa).

GTP is bound by residues 22–28 and 50–52; these read GDEGKGK and GHT. Catalysis depends on Asp-23, which acts as the Proton acceptor. Residues Asp-23 and Gly-50 each coordinate Mg(2+). IMP contacts are provided by residues 23-26, 48-51, Thr-139, Arg-153, Gln-234, Thr-249, and Arg-321; these read DEGK and NAGH. His-51 acts as the Proton donor in catalysis. 317 to 323 contributes to the substrate binding site; sequence SVTGRPR. GTP is bound by residues Arg-323, 349–351, and 431–433; these read KLD and STG.

Belongs to the adenylosuccinate synthetase family. In terms of assembly, homodimer. The cofactor is Mg(2+).

The protein localises to the cytoplasm. It catalyses the reaction IMP + L-aspartate + GTP = N(6)-(1,2-dicarboxyethyl)-AMP + GDP + phosphate + 2 H(+). It functions in the pathway purine metabolism; AMP biosynthesis via de novo pathway; AMP from IMP: step 1/2. In terms of biological role, plays an important role in the de novo pathway of purine nucleotide biosynthesis. Catalyzes the first committed step in the biosynthesis of AMP from IMP. The chain is Adenylosuccinate synthetase 1 from Burkholderia lata (strain ATCC 17760 / DSM 23089 / LMG 22485 / NCIMB 9086 / R18194 / 383).